The following is a 369-amino-acid chain: Ubiquitin-conjugating enzyme E2 Q2 (369 aa).

The interval 117 to 143 is disordered; it reads DQPLPTGQNGTTEEVTSEEEEEEEMAE. The segment covering 131–143 has biased composition (acidic residues); it reads VTSEEEEEEEMAE. One can recognise a UBC core domain in the interval 198–362; sequence QASDRLMKEL…VQIHEKNGWY (165 aa). Cys298 acts as the Glycyl thioester intermediate in catalysis.

Belongs to the ubiquitin-conjugating enzyme family. Post-translationally, auto-ubiquitinated in vitro. As to expression, detected at embryo implantation sites in the luminal epithelium of pregnant endometrium. Detected at low levels in ovary and liver.

The protein resides in the cytoplasm. The catalysed reaction is S-ubiquitinyl-[E1 ubiquitin-activating enzyme]-L-cysteine + [E2 ubiquitin-conjugating enzyme]-L-cysteine = [E1 ubiquitin-activating enzyme]-L-cysteine + S-ubiquitinyl-[E2 ubiquitin-conjugating enzyme]-L-cysteine.. It participates in protein modification; protein ubiquitination. Its function is as follows. Accepts ubiquitin from the E1 complex and catalyzes its covalent attachment to other proteins. In vitro catalyzes 'Lys-48'-linked polyubiquitination. This chain is Ubiquitin-conjugating enzyme E2 Q2 (UBE2Q2), found in Oryctolagus cuniculus (Rabbit).